The chain runs to 483 residues: uncharacterized protein (483 aa).

Residues 96–137 form a WD repeat; that stretch reads IQCDQDPLSSISWSPSGELLLWSSFDSKITVWSLNTQKGYLL.

This is an uncharacterized protein from Schizosaccharomyces pombe (strain 972 / ATCC 24843) (Fission yeast).